Consider the following 89-residue polypeptide: MEYQYPLDYDWSNEEMVTMVKFYEAIEKAYEKGIIREELMGLYRRFKEIVPSKAEEKKIDKEFQEVSGYSIYRAIQRAKEVEEQKLVKI.

This sequence belongs to the UPF0223 family.

The sequence is that of UPF0223 protein BCB4264_A4064 from Bacillus cereus (strain B4264).